A 432-amino-acid chain; its full sequence is D-amino acid dehydrogenase (432 aa).

3–17 (VVILGSGVVGVTSAW) provides a ligand contact to FAD.

This sequence belongs to the DadA oxidoreductase family. FAD is required as a cofactor.

It carries out the reaction a D-alpha-amino acid + A + H2O = a 2-oxocarboxylate + AH2 + NH4(+). The protein operates within amino-acid degradation; D-alanine degradation; NH(3) and pyruvate from D-alanine: step 1/1. Functionally, oxidative deamination of D-amino acids. The chain is D-amino acid dehydrogenase from Salmonella paratyphi C (strain RKS4594).